A 1502-amino-acid chain; its full sequence is DNA-directed RNA polymerase subunit beta' (1502 aa).

Residues C60, C62, C75, and C78 each coordinate Zn(2+). The segment at 265–293 is disordered; that stretch reads RKQRDLEDAEQLTGAERERKEYEASQERE. Positions 279-293 are enriched in basic and acidic residues; the sequence is AERERKEYEASQERE. Mg(2+)-binding residues include D626, D628, and D630. Residues C1002, C1075, C1082, and C1085 each coordinate Zn(2+). A disordered region spans residues 1472-1502; that stretch reads SDDNGDEVGKNGEFADETPFTGDSDDRDNEI.

The protein belongs to the RNA polymerase beta' chain family. The RNAP catalytic core consists of 2 alpha, 1 beta, 1 beta' and 1 omega subunit. When a sigma factor is associated with the core the holoenzyme is formed, which can initiate transcription. Mg(2+) is required as a cofactor. Requires Zn(2+) as cofactor.

The catalysed reaction is RNA(n) + a ribonucleoside 5'-triphosphate = RNA(n+1) + diphosphate. Its function is as follows. DNA-dependent RNA polymerase catalyzes the transcription of DNA into RNA using the four ribonucleoside triphosphates as substrates. The polypeptide is DNA-directed RNA polymerase subunit beta' (Roseiflexus castenholzii (strain DSM 13941 / HLO8)).